The chain runs to 156 residues: Large ribosomal subunit protein uL30 (156 aa).

The protein belongs to the universal ribosomal protein uL30 family. As to quaternary structure, part of the 50S ribosomal subunit.

This Sulfolobus acidocaldarius (strain ATCC 33909 / DSM 639 / JCM 8929 / NBRC 15157 / NCIMB 11770) protein is Large ribosomal subunit protein uL30.